An 840-amino-acid polypeptide reads, in one-letter code: Translation initiation factor IF-2 (840 aa).

The tract at residues 1–251 is disordered; it reads MTEEKKFSSS…GPAVPATERK (251 aa). Composition is skewed to polar residues over residues 38-50 and 65-83; these read DGTN…TPRS and NRHT…ASRP. The segment covering 84 to 102 has biased composition (low complexity); sequence NQSKSQGQGGRNNQRPGSR. Basic and acidic residues-rich tracts occupy residues 110–135 and 158–168; these read PMIR…KTDN and KPAEQSKKAAE. Low complexity predominate over residues 169–207; the sequence is KPAQTKPKTAETKTTATTTQSGTGKFGGALASGNNSARN. The span at 230 to 239 shows a compositional bias: basic residues; it reads GSKKSRRIAA. The region spanning 341 to 510 is the tr-type G domain; sequence ARPPVVTIMG…LLQAEVLELK (170 aa). Residues 350–357 form a G1 region; it reads GHVDHGKT. 350 to 357 contributes to the GTP binding site; that stretch reads GHVDHGKT. The segment at 375-379 is G2; the sequence is GITQH. Residues 396-399 form a G3 region; sequence DTPG. GTP contacts are provided by residues 396-400 and 450-453; these read DTPGH and NKID. The tract at residues 450–453 is G4; sequence NKID. Residues 486–488 are G5; that stretch reads SAK.

This sequence belongs to the TRAFAC class translation factor GTPase superfamily. Classic translation factor GTPase family. IF-2 subfamily.

The protein resides in the cytoplasm. Functionally, one of the essential components for the initiation of protein synthesis. Protects formylmethionyl-tRNA from spontaneous hydrolysis and promotes its binding to the 30S ribosomal subunits. Also involved in the hydrolysis of GTP during the formation of the 70S ribosomal complex. This Leuconostoc citreum (strain KM20) protein is Translation initiation factor IF-2.